A 204-amino-acid polypeptide reads, in one-letter code: Nicotine blue oxidoreductase (204 aa).

As to quaternary structure, homotetramer. FMN is required as a cofactor.

The catalysed reaction is 3,3'-bipyridine-2,2',5,5',6,6'-hexol + NADP(+) = (E)-2,2',5,5'-tetrahydroxy-6H,6'H-(3,3'-bipyridinylidene)-6,6'-dione + NADPH + 3 H(+). It catalyses the reaction 3,3'-bipyridine-2,2',5,5',6,6'-hexol + NAD(+) = (E)-2,2',5,5'-tetrahydroxy-6H,6'H-(3,3'-bipyridinylidene)-6,6'-dione + NADH + 3 H(+). It functions in the pathway alkaloid degradation; nicotine degradation. In terms of biological role, catalyzes the reduction of nicotine blue to its hydroquinone form. Nicotine blue is the name given to the compound formed by the autocatalytic condensation of two molecules of 2,3,6-trihydroxypyridine, an intermediate in the nicotine degradation pathway. May play a role in preventing the intracellular formation of nicotine blue semiquinone radicals, which by redox cycling would lead to the formation of toxic reactive oxygen species. Besides nicotine blue, several other quinones are reduced by nboR. In Paenarthrobacter nicotinovorans (Arthrobacter nicotinovorans), this protein is Nicotine blue oxidoreductase (nboR).